A 197-amino-acid polypeptide reads, in one-letter code: Imidazoleglycerol-phosphate dehydratase (197 aa).

Belongs to the imidazoleglycerol-phosphate dehydratase family.

It localises to the cytoplasm. It catalyses the reaction D-erythro-1-(imidazol-4-yl)glycerol 3-phosphate = 3-(imidazol-4-yl)-2-oxopropyl phosphate + H2O. The protein operates within amino-acid biosynthesis; L-histidine biosynthesis; L-histidine from 5-phospho-alpha-D-ribose 1-diphosphate: step 6/9. The polypeptide is Imidazoleglycerol-phosphate dehydratase (Laribacter hongkongensis (strain HLHK9)).